Consider the following 383-residue polypeptide: MKLLILTLFLATIVLAQALTVPLNFHQASRESRRRVPQKWSNRLSALNAGTTIPISDFEDAQYYGAITIGTPGQAFKVVFDTGSSNLWIPSKKCPITVVACDLHNKYNSGASSTYVANGTDFTIQYGSGAMSGFVSQDSVTVGSLTVKDQLFAEATAEPGIAFDFAKFDGILGLAFQSISVNSIPPVFYNMLSQGLVSSTLFSFWLSRTPGANGGELSFGSIDNTKYTGDITYVPLTNETYWEFVMDDFAIDGQSAGFCGTTCHAICDSGTSLIAGPMADITALNEKLGAVILNGEGVFSDCSVINTLPNVTITVAGREFVLTPKEYVLEVTEFGKTECLSGFMGIELNMGNFWILGDVFISAYYTVFDFGNKQVGFATAIQG.

The first 18 residues, 1–18 (MKLLILTLFLATIVLAQA), serve as a signal peptide directing secretion. A propeptide spanning residues 19–48 (LTVPLNFHQASRESRRRVPQKWSNRLSALN) is cleaved from the precursor. In terms of domain architecture, Peptidase A1 spans 63 to 378 (YYGAITIGTP…DFGNKQVGFA (316 aa)). D81 is a catalytic residue. The cysteines at positions 94 and 101 are disulfide-linked. N118 and N238 each carry an N-linked (GlcNAc...) asparagine glycan. C259 and C263 are joined by a disulfide. D268 is an active-site residue. An intrachain disulfide couples C302 to C339. N310 carries an N-linked (GlcNAc...) asparagine glycan.

The protein belongs to the peptidase A1 family. In terms of assembly, monomer. N-glycosylated on 2 out of the 3 potential sites. Glycans contain sulfated Mannose.

It is found in the lysosome. The protein localises to the secreted. It carries out the reaction Specificity similar to, but narrower than, that of pepsin A. Does not cleave the 4-Gln-|-His-5 bond in B chain of insulin.. In terms of biological role, protease that may act during cell growth and/or development. In Dictyostelium discoideum (Social amoeba), this protein is Cathepsin D (ctsD).